The chain runs to 179 residues: Photosystem I assembly protein Ycf4 (179 aa).

The next 2 helical transmembrane spans lie at 21 to 41 and 59 to 79; these read LISF…YLGV and IVMT…LLNI.

The protein belongs to the Ycf4 family.

It is found in the plastid. Its subcellular location is the chloroplast thylakoid membrane. Functionally, seems to be required for the assembly of the photosystem I complex. This is Photosystem I assembly protein Ycf4 from Rhodomonas salina (Cryptomonas salina).